Reading from the N-terminus, the 337-residue chain is Ketol-acid reductoisomerase (NADP(+)) (337 aa).

A KARI N-terminal Rossmann domain is found at 3 to 183; the sequence is VEMFYDDDAD…GGARAGVIKT (181 aa). NADP(+) is bound by residues 26 to 29, Lys-49, Ser-52, Ser-54, and 84 to 87; these read YGSQ and DTAQ. Residue His-109 is part of the active site. An NADP(+)-binding site is contributed by Gly-135. Residues 184–329 enclose the KARI C-terminal knotted domain; that stretch reads TFKEETETDL…KKLRDLMSWV (146 aa). Residues Asp-192, Glu-196, Glu-228, and Glu-232 each contribute to the Mg(2+) site. Substrate is bound at residue Ser-253.

It belongs to the ketol-acid reductoisomerase family. Mg(2+) serves as cofactor.

The enzyme catalyses (2R)-2,3-dihydroxy-3-methylbutanoate + NADP(+) = (2S)-2-acetolactate + NADPH + H(+). It carries out the reaction (2R,3R)-2,3-dihydroxy-3-methylpentanoate + NADP(+) = (S)-2-ethyl-2-hydroxy-3-oxobutanoate + NADPH + H(+). It functions in the pathway amino-acid biosynthesis; L-isoleucine biosynthesis; L-isoleucine from 2-oxobutanoate: step 2/4. The protein operates within amino-acid biosynthesis; L-valine biosynthesis; L-valine from pyruvate: step 2/4. Its function is as follows. Involved in the biosynthesis of branched-chain amino acids (BCAA). Catalyzes an alkyl-migration followed by a ketol-acid reduction of (S)-2-acetolactate (S2AL) to yield (R)-2,3-dihydroxy-isovalerate. In the isomerase reaction, S2AL is rearranged via a Mg-dependent methyl migration to produce 3-hydroxy-3-methyl-2-ketobutyrate (HMKB). In the reductase reaction, this 2-ketoacid undergoes a metal-dependent reduction by NADPH to yield (R)-2,3-dihydroxy-isovalerate. The polypeptide is Ketol-acid reductoisomerase (NADP(+)) (Mycobacterium sp. (strain JLS)).